The chain runs to 547 residues: Glucose-6-phosphate isomerase (547 aa).

Catalysis depends on Glu-353, which acts as the Proton donor. Active-site residues include His-384 and Lys-512.

It belongs to the GPI family.

The protein resides in the cytoplasm. It carries out the reaction alpha-D-glucose 6-phosphate = beta-D-fructose 6-phosphate. It functions in the pathway carbohydrate biosynthesis; gluconeogenesis. It participates in carbohydrate degradation; glycolysis; D-glyceraldehyde 3-phosphate and glycerone phosphate from D-glucose: step 2/4. Its function is as follows. Catalyzes the reversible isomerization of glucose-6-phosphate to fructose-6-phosphate. The polypeptide is Glucose-6-phosphate isomerase (Pseudoalteromonas atlantica (strain T6c / ATCC BAA-1087)).